The following is a 164-amino-acid chain: Interferon gamma (164 aa).

A signal peptide spans 1–19; the sequence is MTCQTYNLFVLSVIMIYYG. Residues N42 and N61 are each glycosylated (N-linked (GlcNAc...) asparagine).

It belongs to the type II (or gamma) interferon family. As to quaternary structure, homodimer.

Its subcellular location is the secreted. Functionally, produced by lymphocytes activated by specific antigens or mitogens. IFN-gamma, in addition to having antiviral activity, has important immunoregulatory functions. It is a potent activator of macrophages, it has antiproliferative effects on transformed cells and it can potentiate the antiviral and antitumor effects of the type I interferons. The chain is Interferon gamma (IFNG) from Meleagris gallopavo (Wild turkey).